Here is a 148-residue protein sequence, read N- to C-terminus: Macrodomain Ter protein (148 aa).

It belongs to the MatP family. In terms of assembly, homodimer.

The protein resides in the cytoplasm. In terms of biological role, required for spatial organization of the terminus region of the chromosome (Ter macrodomain) during the cell cycle. Prevents early segregation of duplicated Ter macrodomains during cell division. Binds specifically to matS, which is a 13 bp signature motif repeated within the Ter macrodomain. The chain is Macrodomain Ter protein from Haemophilus ducreyi (strain 35000HP / ATCC 700724).